The chain runs to 155 residues: Transcriptional repressor NrdR (155 aa).

Residues 3-34 (CPFCGHSSTQVLDSRVSEDGDTVRRRRRCEAC) fold into a zinc finger. The region spanning 49–139 (PAIVKKNGSR…VYRSFEDVSE (91 aa)) is the ATP-cone domain.

Belongs to the NrdR family. Zn(2+) is required as a cofactor.

Functionally, negatively regulates transcription of bacterial ribonucleotide reductase nrd genes and operons by binding to NrdR-boxes. The polypeptide is Transcriptional repressor NrdR (Cupriavidus metallidurans (strain ATCC 43123 / DSM 2839 / NBRC 102507 / CH34) (Ralstonia metallidurans)).